The chain runs to 535 residues: Alpha-1,3-mannosyl-glycoprotein 4-beta-N-acetylglucosaminyltransferase A (535 aa).

Topologically, residues 1–6 (MRLRNG) are cytoplasmic. The helical; Signal-anchor for type II membrane protein transmembrane segment at 7–27 (TVATVLVFITTFLSLSWYTAW) threads the bilayer. Positions 28 to 54 (QNGKEKLIAYQREFHALKERLRIAEHR) form a coiled coil. Residues 28–535 (QNGKEKLIAY…NEIHIKKMTN (508 aa)) lie on the Lumenal side of the membrane. N-linked (GlcNAc...) asparagine glycosylation is found at Asn-77, Asn-85, and Asn-458.

It belongs to the glycosyltransferase 54 family. A divalent metal cation is required as a cofactor. N-glycosylated.

The protein localises to the golgi apparatus membrane. The protein resides in the secreted. It catalyses the reaction N(4)-{beta-D-GlcNAc-(1-&gt;2)-alpha-D-Man-(1-&gt;3)-[beta-D-GlcNAc-(1-&gt;2)-alpha-D-Man-(1-&gt;6)]-beta-D-Man-(1-&gt;4)-beta-D-GlcNAc-(1-&gt;4)-beta-D-GlcNAc}-L-asparaginyl-[protein] + UDP-N-acetyl-alpha-D-glucosamine = N(4)-{beta-D-GlcNAc-(1-&gt;2)-[beta-D-GlcNAc-(1-&gt;4)]-alpha-D-Man-(1-&gt;3)-[beta-D-GlcNAc-(1-&gt;2)-alpha-D-Man-(1-&gt;6)]-beta-D-Man-(1-&gt;4)-beta-D-GlcNAc-(1-&gt;4)-beta-D-GlcNAc}-L-asparaginyl-[protein] + UDP + H(+). The enzyme catalyses an N(4)-{beta-D-GlcNAc-(1-&gt;2)-alpha-D-Man-(1-&gt;3)-[alpha-D-Man-(1-&gt;6)]-beta-D-Man-(1-&gt;4)-beta-D-GlcNAc-(1-&gt;4)-beta-D-GlcNAc}-L-asparaginyl-[protein] + UDP-N-acetyl-alpha-D-glucosamine = an N(4)-{beta-D-GlcNAc-(1-&gt;2)-[beta-D-GlcNAc-(1-&gt;4)]-alpha-D-Man-(1-&gt;3)-[alpha-D-Man-(1-&gt;6)]-beta-D-Man-(1-&gt;4)-beta-D-GlcNAc-(1-&gt;4)-beta-D-GlcNAc}-L-asparaginyl-[protein] + UDP + H(+). The catalysed reaction is an N(4)-{beta-D-GlcNAc-(1-&gt;2)-alpha-D-Man-(1-&gt;3)-[beta-D-GlcNAc-(1-&gt;2)-[beta-D-GlcNAc-(1-&gt;6)]-alpha-D-Man-(1-&gt;6)]-beta-D-Man-(1-&gt;4)-beta-D-GlcNAc-(1-&gt;4)-beta-D-GlcNAc}-L-asparaginyl-[protein] + UDP-N-acetyl-alpha-D-glucosamine = an N(4)-{beta-D-GlcNAc-(1-&gt;2)-[beta-D-GlcNAc-(1-&gt;4)]-alpha-D-Man-(1-&gt;3)-[beta-D-GlcNAc-(1-&gt;2)-[beta-D-GlcNAc-(1-&gt;6)]-alpha-D-Man-(1-&gt;6)]-beta-D-Man-(1-&gt;4)-beta-D-GlcNAc-(1-&gt;4)-beta-D-GlcNAc}-L-asparaginyl-[protein] + UDP + H(+). It carries out the reaction an N(4)-{beta-D-GlcNAc-(1-&gt;2)-alpha-D-Man-(1-&gt;3)-[beta-D-GlcNAc-(1-&gt;2)-alpha-D-Man-(1-&gt;6)]-beta-D-Man-(1-&gt;4)-beta-D-GlcNAc-(1-&gt;4)-[alpha-L-Fuc-(1-&gt;6)]-beta-D-GlcNAc}-L-asparaginyl-[protein] + UDP-N-acetyl-alpha-D-glucosamine = N(4)-{beta-D-GlcNAc-(1-&gt;2)-[beta-D-GlcNAc-(1-&gt;4)]-alpha-D-Man-(1-&gt;3)-[beta-D-GlcNAc-(1-&gt;2)-alpha-D-Man-(1-&gt;6)]-beta-D-Man-(1-&gt;4)-beta-D-GlcNAc-(1-&gt;4)-[alpha-L-Fuc-(1-&gt;6)]-beta-D-GlcNAc}-asparaginyl-[protein] + UDP + H(+). It catalyses the reaction an N(4)-{beta-D-GlcNAc-(1-&gt;2)-alpha-D-Man-(1-&gt;3)-[beta-D-Gal-(1-&gt;4)-beta-D-GlcNAc-(1-&gt;2)-alpha-D-Man-(1-&gt;6)]-beta-D-Man-(1-&gt;4)-beta-D-GlcNAc-(1-&gt;4)-beta-D-GlcNAc}-L-asparaginyl-[protein] + UDP-N-acetyl-alpha-D-glucosamine = an N(4)-{beta-D-GlcNAc-(1-&gt;2)-[beta-D-GlcNAc-(1-&gt;4)]-alpha-D-Man-(1-&gt;3)-[beta-D-Gal-(1-&gt;4)-beta-D-GlcNAc-(1-&gt;2)-alpha-D-Man-(1-&gt;6)]-beta-D-Man-(1-&gt;4)-beta-D-GlcNAc-(1-&gt;4)-beta-D-GlcNAc}-L-asparaginyl-[protein] + UDP + H(+). The enzyme catalyses N(4)-{beta-D-GlcNAc-(1-&gt;2)-alpha-D-Man-(1-&gt;3)-[alpha-D-Man-(1-&gt;3)-{alpha-D-Man-(1-&gt;6)}-alpha-D-Man-(1-&gt;6)]-beta-D-Man-(1-&gt;4)-beta-D-GlcNAc-(1-&gt;4)-beta-D-GlcNAc}-asparaginyl-[protein] + UDP-N-acetyl-alpha-D-glucosamine = N(4)-{beta-D-GlcNAc-(1-&gt;2)-[beta-D-GlcNAc-(1-&gt;4)]-alpha-D-Man-(1-&gt;3)-[alpha-D-Man-(1-&gt;3)-{alpha-D-Man-(1-&gt;6)}-alpha-D-Man-(1-&gt;6)]-beta-D-Man-(1-&gt;4)-beta-D-GlcNAc-(1-&gt;4)-beta-D-GlcNAc}-asparaginyl-[protein] + UDP + H(+). The catalysed reaction is N(4)-{beta-D-GlcNAc-(1-&gt;2)-alpha-D-Man-(1-&gt;3)-beta-D-Man-(1-&gt;4)-beta-D-GlcNAc-(1-&gt;4)-beta-D-GlcNAc}-asparaginyl-[protein] + UDP-N-acetyl-alpha-D-glucosamine = N(4)-{beta-D-GlcNAc-(1-&gt;2)-[beta-D-GlcNAc-(1-&gt;4)]-alpha-D-Man-(1-&gt;3)-beta-D-Man-(1-&gt;4)-beta-D-GlcNAc-(1-&gt;4)-beta-D-GlcNAc}-asparaginyl-[protein] + UDP + H(+). Its pathway is protein modification; protein glycosylation. With respect to regulation, inhibited by UDP. In terms of biological role, glycosyltransferase that catalyze the transfer of GlcNAc from UDP-GlcNAc to the GlcNAcbeta1-2Manalpha1-3 arm of the core structure of N-linked glycans through a beta1-4 linkage and participates in the production of tri- and tetra-antennary N-linked sugar chains. Involved in glucose transport by mediating SLC2A2/GLUT2 glycosylation, thereby controlling cell-surface expression of SLC2A2 in pancreatic beta cells. This chain is Alpha-1,3-mannosyl-glycoprotein 4-beta-N-acetylglucosaminyltransferase A, found in Gallus gallus (Chicken).